Consider the following 232-residue polypeptide: MGKMGKRFAAAKAAVEGKENITVEEAVALLKGNSKTKFDETIEIAMKLGVDPRHADQMVRGTVNLPNGTGKTVRVAVFARGPKAEEATAAGADIVGAEDLMETVQGGTIEFDRCIATPDMMPIVGRLGKVLGPRNLMPNPKIGTVTMDVKEAVEAAKGGQVQFKAEKAGVVHAGVGKASFTEAQLVENVRAFVDAVSKAKPSGSKGTYMQKINLTSTMGPGVSLSVENATGN.

It belongs to the universal ribosomal protein uL1 family. In terms of assembly, part of the 50S ribosomal subunit.

Functionally, binds directly to 23S rRNA. The L1 stalk is quite mobile in the ribosome, and is involved in E site tRNA release. Protein L1 is also a translational repressor protein, it controls the translation of the L11 operon by binding to its mRNA. In Jannaschia sp. (strain CCS1), this protein is Large ribosomal subunit protein uL1.